A 201-amino-acid chain; its full sequence is L(+)-tartrate dehydratase subunit beta (201 aa).

Residue His37 is part of the active site.

It belongs to the class-I fumarase family. In terms of assembly, heterotetramer of two alpha and two beta subunits.

It catalyses the reaction (2R,3R)-tartrate = oxaloacetate + H2O. The chain is L(+)-tartrate dehydratase subunit beta (ttdB) from Shigella boydii serotype 4 (strain Sb227).